A 366-amino-acid polypeptide reads, in one-letter code: Latent membrane protein 1 (366 aa).

Over 1-23 the chain is Cytoplasmic; sequence MERDLERGPPGPPRPPLGPPLSS. Residues 24–44 traverse the membrane as a helical segment; the sequence is SIGLALLLLLLALLFWLYIVL. The Extracellular portion of the chain corresponds to 45–51; it reads SNWTGGA. Residues 52-72 traverse the membrane as a helical segment; it reads LLVLYSFALMLIIIILIIFIF. Topologically, residues 73 to 75 are cytoplasmic; the sequence is RRD. The helical transmembrane segment at 76 to 96 threads the bilayer; the sequence is LLCPLGGLGLLLLMVTLLLIA. The Extracellular segment spans residues 97–106; the sequence is LWNLHGQALY. A helical membrane pass occupies residues 107-127; that stretch reads LGIVLFIFGCLLVLGLWIYFL. Over 128 to 139 the chain is Cytoplasmic; sequence EILWRLGATIWQ. A helical transmembrane segment spans residues 140-160; sequence LLAFILAFFLAIILLIIALYL. Topologically, residues 161 to 163 are extracellular; the sequence is QQN. A helical membrane pass occupies residues 164–184; that stretch reads WWTLLVDLLWLLLFMAILIWM. Residues 185–366 are Cytoplasmic-facing; it reads YFHGPRHTDE…HGPVQLSYYD (182 aa). The tract at residues 194 to 232 is CTAR1; the sequence is EHHHDDSLPHPQQATDDSSHESDSNSNEGRHHLLVSGAG. A disordered region spans residues 194-366; the sequence is EHHHDDSLPH…HGPVQLSYYD (173 aa). An Interaction with host TRAF proteins motif is present at residues 204–208; the sequence is PQQAT. The segment covering 210 to 224 has biased composition (basic and acidic residues); the sequence is DSSHESDSNSNEGRH. Low complexity-rich tracts occupy residues 251–267 and 337–346; these read NGPQDPDNTDDNGPQDP and PHLPTLLLGT. The segment at 332–366 is CTAR2; that stretch reads GGGGDPHLPTLLLGTSGSGGDDDDPHGPVQLSYYD.

The protein belongs to the herpesviridae LMP-1 family. As to quaternary structure, interacts (via PXQXT motif) with host tumor necrosis factor receptor-associated factor (TRAF) proteins TRAF1, TRAF2, TRAF3 and TRAF5. Interacts with human protein ZMYND11; leading to negatively regulate NF-kappa-B activation. Interacts with host UBE2I; this interaction induces the sumoylation of various cellular proteins. Interacts with host IRF7. Ubiquitinated on the N-terminus.

It localises to the host cell membrane. Its function is as follows. Acts as a CD40 functional homolog to prevent apoptosis of infected B-lymphocytes and drive their proliferation. Functions as a constitutively active tumor necrosis factor receptor that induces the activation of several signaling pathways, including those of the NF-kappa-B family. LMP1 signaling leads to up-regulation of antiapoptotic proteins and provide growth signals in latently infected cells. Interacts with host UBE2I and subsequently affects the sumoylation state of several cellular proteins. For example, induces the sumoylation of host IRF7 thereby limiting its transcriptional activity and modulating the activation of innate immune responses. Also inhibits host IFN-alpha-stimulated STAT2 nuclear translocation and interferon-stimulated response element transcriptional activity by interacting with and inhibiting host TYK2. Induces SUMO expression during viral latency thereby dysregulating the host sumoylation processes. This Homo sapiens (Human) protein is Latent membrane protein 1 (LMP1).